The primary structure comprises 591 residues: NADP-dependent malic enzyme (591 aa).

Residues 1-10 (MESTLKEMRD) are compositionally biased toward basic and acidic residues. Residues 1-26 (MESTLKEMRDGASVLDMDPKSTVGGG) form a disordered region. Tyr139 functions as the Proton donor in the catalytic mechanism. NAD(+) is bound at residue Arg192. Lys210 serves as the catalytic Proton acceptor. A divalent metal cation is bound by residues Glu282, Asp283, and Asp306. Asp306 contacts NAD(+). 335–351 (LFLGAGEAGTGIAELIA) serves as a coordination point for NADP(+). An NAD(+)-binding site is contributed by Asn447.

Belongs to the malic enzymes family. Homotetramer. It depends on Mg(2+) as a cofactor. Mn(2+) serves as cofactor. As to expression, mRNA found twofold higher in leaves and stems than in roots.

The protein resides in the cytoplasm. The catalysed reaction is (S)-malate + NADP(+) = pyruvate + CO2 + NADPH. The enzyme catalyses oxaloacetate + H(+) = pyruvate + CO2. The sequence is that of NADP-dependent malic enzyme from Populus trichocarpa (Western balsam poplar).